Reading from the N-terminus, the 270-residue chain is MNSKLVLLVVGVVFALVLVIGRQGGVVAPQSISVSPQMSTAAPVAAPIAFPQATNVAMAVEPMAAAGGTVAAMESPLPNFVPRNLKVFEGHWQGMDGRLMTEELARKLNYPRGVQGVLLGEVTLNAAFSGLLGGDVVVRIDDTPVTNMENFQAATRNVANRSEARISVIRKDNRPGTPVLRKLTVVLRAAEGGLGFAQLEGAPMILPGDPRPHGYRGACTDCHPVGQGFELSPDPDLISLPPSAITRDAVTRGVSPHEVRGPCEACHVIN.

The Cytoplasmic segment spans residues 1 to 6; that stretch reads MNSKLV. A transmembrane span lies at residues 7–20; sequence LLVVGVVFALVLVI. At 21–270 the chain is on the lumenal side; it reads GRQGGVVAPQ…GPCEACHVIN (250 aa). The interval 84–201 is PDZ; that stretch reads NLKVFEGHWQ…GGLGFAQLEG (118 aa). The MCR (magnetochrome) 1 signature appears at 205–225; sequence ILPGDPRPHGYRGACTDCHPV. Residues cysteine 219, cysteine 222, histidine 223, cysteine 263, cysteine 266, and histidine 267 each contribute to the heme site. The MCR 2 motif lies at 245-269; sequence ITRDAVTRGVSPHEVRGPCEACHVI.

The protein belongs to the magnetosome MamP family. In terms of assembly, homodimer. Heme is required as a cofactor. Subject to proteolytic cleavage which requires both MamE and MamO.

The protein resides in the cell inner membrane. Involved in redox-control of magnetite formation. Oxidizes Fe(2+) at alkaline pH; successively forms ferrihydrite (Fe(3+)(2)O(3) 0.5 H(2)O) then magnetite (Fe(3)O(4)) from an Fe(2+) solution. This chain is Multi-heme protein MamP, found in Magnetospirillum gryphiswaldense (strain DSM 6361 / JCM 21280 / NBRC 15271 / MSR-1).